A 206-amino-acid polypeptide reads, in one-letter code: Imidazoleglycerol-phosphate dehydratase (206 aa).

Belongs to the imidazoleglycerol-phosphate dehydratase family.

The protein resides in the cytoplasm. The catalysed reaction is D-erythro-1-(imidazol-4-yl)glycerol 3-phosphate = 3-(imidazol-4-yl)-2-oxopropyl phosphate + H2O. It functions in the pathway amino-acid biosynthesis; L-histidine biosynthesis; L-histidine from 5-phospho-alpha-D-ribose 1-diphosphate: step 6/9. The chain is Imidazoleglycerol-phosphate dehydratase from Leptospira interrogans serogroup Icterohaemorrhagiae serovar copenhageni (strain Fiocruz L1-130).